The sequence spans 235 residues: Ubiquinone/menaquinone biosynthesis C-methyltransferase UbiE (235 aa).

Residues Thr-60, Asp-81, and Ser-126 each coordinate S-adenosyl-L-methionine.

This sequence belongs to the class I-like SAM-binding methyltransferase superfamily. MenG/UbiE family.

The catalysed reaction is a 2-demethylmenaquinol + S-adenosyl-L-methionine = a menaquinol + S-adenosyl-L-homocysteine + H(+). It carries out the reaction a 2-methoxy-6-(all-trans-polyprenyl)benzene-1,4-diol + S-adenosyl-L-methionine = a 5-methoxy-2-methyl-3-(all-trans-polyprenyl)benzene-1,4-diol + S-adenosyl-L-homocysteine + H(+). Its pathway is quinol/quinone metabolism; menaquinone biosynthesis; menaquinol from 1,4-dihydroxy-2-naphthoate: step 2/2. It participates in cofactor biosynthesis; ubiquinone biosynthesis. In terms of biological role, methyltransferase required for the conversion of demethylmenaquinol (DMKH2) to menaquinol (MKH2) and the conversion of 2-polyprenyl-6-methoxy-1,4-benzoquinol (DDMQH2) to 2-polyprenyl-3-methyl-6-methoxy-1,4-benzoquinol (DMQH2). This is Ubiquinone/menaquinone biosynthesis C-methyltransferase UbiE from Citrifermentans bemidjiense (strain ATCC BAA-1014 / DSM 16622 / JCM 12645 / Bem) (Geobacter bemidjiensis).